The sequence spans 353 residues: Nicotinate-nucleotide--dimethylbenzimidazole phosphoribosyltransferase (353 aa).

Glu-318 serves as the catalytic Proton acceptor.

Belongs to the CobT family.

It catalyses the reaction 5,6-dimethylbenzimidazole + nicotinate beta-D-ribonucleotide = alpha-ribazole 5'-phosphate + nicotinate + H(+). It functions in the pathway nucleoside biosynthesis; alpha-ribazole biosynthesis; alpha-ribazole from 5,6-dimethylbenzimidazole: step 1/2. Its function is as follows. Catalyzes the synthesis of alpha-ribazole-5'-phosphate from nicotinate mononucleotide (NAMN) and 5,6-dimethylbenzimidazole (DMB). The protein is Nicotinate-nucleotide--dimethylbenzimidazole phosphoribosyltransferase of Roseiflexus castenholzii (strain DSM 13941 / HLO8).